The primary structure comprises 568 residues: Potassium-transporting ATPase potassium-binding subunit (568 aa).

12 consecutive transmembrane segments (helical) span residues 7-27 (LLIT…GNII), 67-87 (YALA…TLLV), 137-157 (GLTV…FALI), 180-200 (LYLL…QGVI), 258-278 (FIQI…FGQV), 288-308 (LLWA…YAEL), 332-352 (FGIL…CGAV), 361-381 (ALGG…FGGV), 384-404 (GLYG…LMIG), 421-441 (MVAL…ALTI), 488-508 (LLLA…VLAI), and 535-555 (LLIL…LILG).

The protein belongs to the KdpA family. As to quaternary structure, the system is composed of three essential subunits: KdpA, KdpB and KdpC.

The protein localises to the cell inner membrane. Part of the high-affinity ATP-driven potassium transport (or Kdp) system, which catalyzes the hydrolysis of ATP coupled with the electrogenic transport of potassium into the cytoplasm. This subunit binds the periplasmic potassium ions and delivers the ions to the membrane domain of KdpB through an intramembrane tunnel. This Photorhabdus laumondii subsp. laumondii (strain DSM 15139 / CIP 105565 / TT01) (Photorhabdus luminescens subsp. laumondii) protein is Potassium-transporting ATPase potassium-binding subunit.